The chain runs to 148 residues: uncharacterized protein (148 aa).

In terms of domain architecture, ABC transmembrane type-1 spans L25 to N148. 3 helical membrane-spanning segments follow: residues S26–I46, I60–I80, and I127–Y147.

It localises to the cell membrane. This is an uncharacterized protein from Staphylococcus epidermidis.